The chain runs to 345 residues: Protein RecA (345 aa).

Residue 80 to 87 participates in ATP binding; sequence GPESSGKT.

The protein belongs to the RecA family.

The protein resides in the cytoplasm. Functionally, can catalyze the hydrolysis of ATP in the presence of single-stranded DNA, the ATP-dependent uptake of single-stranded DNA by duplex DNA, and the ATP-dependent hybridization of homologous single-stranded DNAs. It interacts with LexA causing its activation and leading to its autocatalytic cleavage. The sequence is that of Protein RecA from Mycoplasma mycoides subsp. mycoides SC (strain CCUG 32753 / NCTC 10114 / PG1).